The primary structure comprises 1788 residues: MMQVSQGTIGSPWHQAYHSSSSTSDLSGYNHEFLRRSPDQYSSRGSMESLDQASAAYHHHLPPAKSTNCIDQLVHLHNKRDSAYSSFSTNASIPEYRSSPFSKERSYSMESMHSRNSSGQEGIKHADIKYIKTVYDVQRGISEEYEVNSSSVKNRNYSRQPAYNRHSIGPHGRLEQSRFFSESGGFERAAPMPPTRSDSYALTRHHERPNSWSSLDQNRNFRTPKAAGLHSTNTSSNAAQQPKHVHGDGHLHPVLERSPESSPLIKPKQVYSETPQPGQPMLPTGIYPVPAPEPHFAHAPQPPKNNNGRLYPALAKEGSYGAKSSEKVLPFSEPNKNEKDTQNLRSKSVGQYPMNHSVKEREKKQEGPTGFAHYKLHFTAGPDISTSSLTNDRNDQQPLRLDNIDINEQQKNGTKVAEEFSVYAHPAFQNEWSDSKTKQDIASSDIIGLHRNSLSSDAHGEHEYHNHFNIASSSHNKMDERSNRQADHRKKLESLSFTVHADEADGPSSNPLKPDESPSPSQKKSYDFTRRRLSSSSSQSSKTDGNKLSSVFDKVCKIEQREHENHRSQFLCGNINQSGLSTRGQNNKGSFTMVEEIRNKFISQDQTPNPNEWRRLSSSHSNEKVTGMHQLTRQGIVYGLQTGDAQKQMPEKQAEKMHSYNQEQNILQAVPDDDNRSFNSQTMPNKEDDWQCAAQDTLGFNRAYRNSVKDAQCKVLEATSYRRKDLEISPPHYKKPEKNVRPASAPFRKKSSSLSPHAPKERHSVTPTDNCASIQESQGVFFPSRIGAKRRITAEQKKRSYSEPEKMNEVGASESESAPLTVSKMEPVASFSENSVADRRRIFEREGKACSTINLSKPQLKQLQQNALADYIERKTGRRPSSQETRLLKERSQSTYFSGSIMDNQSMTSTSSMNSLNEHNLSYRHREPLSKTGRVSSTLPPGLTGFFDLSSFENNPEYPENRSRSSSFAHQLRSERLLDHRSKVEFGKGRETNKPKEVSLQSDDDVIITSSRRHGKSASAEDLLDRLPQPPALHVRSRSSPASDMKSREYMSRQEVGNKTSYASASNKEIRSIKSNHFEQMSFTPSFKNHIDTGEDPVPENSSTIQRSAQLENQRNTKTQSISGIYSPHPETKQEPLALPIHSVPAKVTQTSLAHATFDYITAEEYLYSGKRGKESASPTDNKEISDQEWCLPENSSSEDLNDPERFAKYTSAQRPQSFETKSGNSINETVQQNKSSGPTAGPKFSTSWKSNGMWSSGSSEAETTFNHGKISLHISESCLQPQSPMTGQEDEGDDEVFVKEQDTESFSGTFVPPSPPPFPPPSLEDALLKQRIEKFPLVPNTLDEIWENTEEASTQVKVKSNERYLQCASEYTASTESSGSYLLNSGITKRDTDGPLLRLSSIVPAPEPLASPVDPTKPIEEQETQPHGADTSILQSSEGNFNPSDSQSTLPHVRSELMSSEDAKSQELAKEIVTKDKSLANILDPDSRMKTTMDLMEGLFTKSSSALKEKNQKRKAKKQIDNIIAPESEXKEEKRETLDNASNYSAYYSTSAPKAELLRKMKTIHSQIGGKEEQFDVNEKKAELISSLTCKLEVLKDAKESLIDDIKLNNSLGEEVETQIETLCKPNEFDKYKMFIGDLDKVVNLLLSLSGRLARVENALSSLGEDASAEERKTWNEKKKQLCGQHEDARELKENLDRREKLVMDFLGNYLTGEEFAHYQHFVKMKSALLIEQRELDDKIKLGQEQLRCLTESLPSDYLISMKVSLPEERRSSLGNKSLPPPLTSSL.

Disordered stretches follow at residues 1–25 (MMQV…STSD), 146–174 (EVNS…HGRL), 225–263 (KAAG…ESSP), 321–367 (GAKS…KQEG), 382–401 (PDIS…PLRL), 469–488 (NIAS…QADH), 498–548 (TVHA…GNKL), 727–768 (EISP…VTPT), 793–821 (TAEQ…APLT), 876–915 (TGRR…SMNS), 1011–1067 (SRRH…SASN), 1086–1133 (SFKN…PETK), 1171–1263 (KRGK…SEAE), 1303–1324 (DTES…PPSL), 1404–1467 (VPAP…AKSQ), and 1507–1538 (ALKE…KRET). Composition is skewed to polar residues over residues 147–161 (VNSS…SRQP) and 230–240 (HSTNTSSNAAQ). Basic and acidic residues-rich tracts occupy residues 245 to 259 (VHGD…ERSP) and 357 to 366 (SVKEREKKQE). Positions 476 to 488 (NKMDERSNRQADH) are enriched in basic and acidic residues. The 104-residue stretch at 708–811 (VKDAQCKVLE…SEPEKMNEVG (104 aa)) folds into the ASD1 domain. Positions 793–808 (TAEQKKRSYSEPEKMN) are enriched in basic and acidic residues. Polar residues predominate over residues 893 to 903 (QSTYFSGSIMD). Residues 904–915 (NQSMTSTSSMNS) show a composition bias toward low complexity. 3 stretches are compositionally biased toward polar residues: residues 1055–1067 (EVGN…SASN), 1100–1124 (ENSS…SISG), and 1211–1263 (TSAQ…SEAE). The span at 1313 to 1323 (PPSPPPFPPPS) shows a compositional bias: pro residues. The span at 1433 to 1451 (SILQSSEGNFNPSDSQSTL) shows a compositional bias: polar residues. In terms of domain architecture, ASD2 spans 1467-1756 (QELAKEIVTK…QLRCLTESLP (290 aa)). Positions 1529–1538 (SEXKEEKRET) are enriched in basic and acidic residues. A coiled-coil region spans residues 1653–1708 (RLARVENALSSLGEDASAEERKTWNEKKKQLCGQHEDARELKENLDRREKLVMDFL).

Belongs to the shroom family. As to quaternary structure, interacts with F-actin. Interacts with ROCK1. As to expression, expressed in epithelial cells of the cement gland.

Its subcellular location is the cell junction. The protein localises to the adherens junction. It localises to the cytoplasm. It is found in the cytoskeleton. The protein resides in the apical cell membrane. In terms of biological role, controls cell shape changes in the neuroepithelium during neural tube closure. Induces apical constriction in epithelial cells by promoting the apical accumulation of F-actin and myosin II, and probably by bundling stress fibers. Induces apicobasal cell elongation by redistributing gamma-tubulin and directing the assembly of robust apicobasal microtubule arrays. The chain is Protein Shroom3 (shroom3) from Xenopus laevis (African clawed frog).